Consider the following 263-residue polypeptide: Insertion sequence IS21-like putative ATP-binding protein (263 aa).

Gly114–Thr121 provides a ligand contact to ATP.

Belongs to the IS21/IS1162 putative ATP-binding protein family.

The sequence is that of Insertion sequence IS21-like putative ATP-binding protein (tnpB) from Bacteroides fragilis.